Reading from the N-terminus, the 409-residue chain is N-acetylglucosamine-6-phosphate deacetylase (409 aa).

Position 143 (Glu143) interacts with a divalent metal cation. Residue 154–155 (AH) participates in substrate binding. 2 residues coordinate a divalent metal cation: His211 and His232. Residues 235 to 236 (NA), Arg243, and 269 to 272 (DGIH) contribute to the substrate site. The active-site Proton donor/acceptor is the Asp294. Substrate is bound at residue 328 to 330 (LSG).

The protein belongs to the metallo-dependent hydrolases superfamily. NagA family. A divalent metal cation is required as a cofactor.

The enzyme catalyses N-acetyl-D-glucosamine 6-phosphate + H2O = D-glucosamine 6-phosphate + acetate. It functions in the pathway amino-sugar metabolism; N-acetylneuraminate degradation. Hydrolyzes the N-glycolyl group from N-glycolylglucosamine 6-phosphate (GlcNGc-6-P) in the N-glycolylneuraminic acid (Neu5Gc) degradation pathway. The sequence is that of N-acetylglucosamine-6-phosphate deacetylase (Amdhd2) from Rattus norvegicus (Rat).